A 105-amino-acid polypeptide reads, in one-letter code: Large ribosomal subunit protein uL24 (105 aa).

This sequence belongs to the universal ribosomal protein uL24 family. As to quaternary structure, part of the 50S ribosomal subunit.

Its function is as follows. One of two assembly initiator proteins, it binds directly to the 5'-end of the 23S rRNA, where it nucleates assembly of the 50S subunit. Functionally, one of the proteins that surrounds the polypeptide exit tunnel on the outside of the subunit. This chain is Large ribosomal subunit protein uL24, found in Xylella fastidiosa (strain 9a5c).